We begin with the raw amino-acid sequence, 276 residues long: UPF0328 protein ECU08_2080 (276 aa).

Positions 1-24 (MGIIDVQRSHLTATPSKERDAPAH) are disordered.

Belongs to the UPF0328 family.

This is UPF0328 protein ECU08_2080 from Encephalitozoon cuniculi (strain GB-M1) (Microsporidian parasite).